Reading from the N-terminus, the 297-residue chain is tRNA (guanine(37)-N(1))/4-demethylwyosine(37)-methyltransferase Taw22 (297 aa).

S-adenosyl-L-methionine contacts are provided by residues Arg-89, Phe-106, and 128–129 (EL).

The protein belongs to the class I-like SAM-binding methyltransferase superfamily. TRM5/TYW2 family.

It localises to the cytoplasm. The catalysed reaction is guanosine(37) in tRNA + S-adenosyl-L-methionine = N(1)-methylguanosine(37) in tRNA + S-adenosyl-L-homocysteine + H(+). It carries out the reaction 4-demethylwyosine(37) in tRNA(Phe) + S-adenosyl-L-methionine = isowyosine(37) in tRNA(Phe) + S-adenosyl-L-homocysteine + H(+). Functionally, catalyzes both the N1-methylation of guanosine and the C7-methylation of 4-demethylwyosine (imG-14) at position 37 in tRNA(Phe). This chain is tRNA (guanine(37)-N(1))/4-demethylwyosine(37)-methyltransferase Taw22, found in Nanoarchaeum equitans (strain Kin4-M).